The primary structure comprises 125 residues: Large ribosomal subunit protein bL12 (125 aa).

The protein belongs to the bacterial ribosomal protein bL12 family. Homodimer. Part of the ribosomal stalk of the 50S ribosomal subunit. Forms a multimeric L10(L12)X complex, where L10 forms an elongated spine to which 2 to 4 L12 dimers bind in a sequential fashion. Binds GTP-bound translation factors.

In terms of biological role, forms part of the ribosomal stalk which helps the ribosome interact with GTP-bound translation factors. Is thus essential for accurate translation. This chain is Large ribosomal subunit protein bL12, found in Chlorobium phaeobacteroides (strain DSM 266 / SMG 266 / 2430).